The chain runs to 230 residues: Large ribosomal subunit protein uL1 (230 aa).

It belongs to the universal ribosomal protein uL1 family. In terms of assembly, part of the 50S ribosomal subunit.

Its function is as follows. Binds directly to 23S rRNA. The L1 stalk is quite mobile in the ribosome, and is involved in E site tRNA release. Functionally, protein L1 is also a translational repressor protein, it controls the translation of the L11 operon by binding to its mRNA. In Acholeplasma laidlawii (strain PG-8A), this protein is Large ribosomal subunit protein uL1.